A 220-amino-acid chain; its full sequence is 7-cyano-7-deazaguanine synthase (220 aa).

V11–M21 serves as a coordination point for ATP. Residues C186, C194, C197, and C200 each contribute to the Zn(2+) site.

It belongs to the QueC family. It depends on Zn(2+) as a cofactor.

The enzyme catalyses 7-carboxy-7-deazaguanine + NH4(+) + ATP = 7-cyano-7-deazaguanine + ADP + phosphate + H2O + H(+). Its pathway is purine metabolism; 7-cyano-7-deazaguanine biosynthesis. Catalyzes the ATP-dependent conversion of 7-carboxy-7-deazaguanine (CDG) to 7-cyano-7-deazaguanine (preQ(0)). The protein is 7-cyano-7-deazaguanine synthase of Porphyromonas gingivalis (strain ATCC BAA-308 / W83).